A 72-amino-acid polypeptide reads, in one-letter code: Putative transmembrane protein DDB_G0272126 (72 aa).

Helical transmembrane passes span 6-26 (KIIK…NTII) and 38-58 (IILV…IFYG).

The protein resides in the membrane. In Dictyostelium discoideum (Social amoeba), this protein is Putative transmembrane protein DDB_G0272126.